Reading from the N-terminus, the 537-residue chain is Efflux pump ustT (537 aa).

Over residues 1–25 (MAKEAQSLHELDNMKEKEVDQEKKA) the composition is skewed to basic and acidic residues. Positions 1–50 (MAKEAQSLHELDNMKEKEVDQEKKAPTSVGDQEEHDDPKKQASHSQNVSE) are disordered. Asparagine 47 carries an N-linked (GlcNAc...) asparagine glycan. Transmembrane regions (helical) follow at residues 71 to 91 (PLAM…VSLL), 104 to 124 (WVYM…AGAM), 137 to 157 (GIGL…NAPL), 162 to 182 (MFLG…PLIG), 193 to 213 (WCFI…FFFV), 236 to 256 (LGSA…QWAG), 266 to 286 (IILL…SQML), and 304 to 324 (FGSF…TYWI). An N-linked (GlcNAc...) asparagine glycan is attached at asparagine 333. 4 helical membrane passes run 339 to 359 (AGIR…MGGG), 363 to 383 (LIGY…VGAG), 397 to 417 (WIGY…QASL), and 430 to 450 (TAIS…VCIG). A glycan (N-linked (GlcNAc...) asparagine) is linked at asparagine 501. The helical transmembrane segment at 507–527 (TFYVALAAGITSMLSAFLVQW) threads the bilayer.

The protein belongs to the major facilitator superfamily. TCR/Tet family.

It is found in the cell membrane. Functionally, efflux pump; part of the gene cluster that mediates the biosynthesis of ustilaginoidins, dimeric gamma-naphthopyrones isolated from different fungal species. The polypeptide is Efflux pump ustT (Ustilaginoidea virens (Rice false smut fungus)).